The following is a 317-amino-acid chain: Beta-ketoacyl-[acyl-carrier-protein] synthase III (317 aa).

Active-site residues include Cys-112 and His-244. The tract at residues 245-249 (QANLR) is ACP-binding. The active site involves Asn-274.

The protein belongs to the thiolase-like superfamily. FabH family. As to quaternary structure, homodimer.

It is found in the cytoplasm. It catalyses the reaction malonyl-[ACP] + acetyl-CoA + H(+) = 3-oxobutanoyl-[ACP] + CO2 + CoA. Its pathway is lipid metabolism; fatty acid biosynthesis. In terms of biological role, catalyzes the condensation reaction of fatty acid synthesis by the addition to an acyl acceptor of two carbons from malonyl-ACP. Catalyzes the first condensation reaction which initiates fatty acid synthesis and may therefore play a role in governing the total rate of fatty acid production. Possesses both acetoacetyl-ACP synthase and acetyl transacylase activities. Its substrate specificity determines the biosynthesis of branched-chain and/or straight-chain of fatty acids. The chain is Beta-ketoacyl-[acyl-carrier-protein] synthase III from Salmonella typhimurium (strain LT2 / SGSC1412 / ATCC 700720).